The following is a 232-amino-acid chain: Octanoyltransferase (232 aa).

In terms of domain architecture, BPL/LPL catalytic spans 44-219 (EHTGDELWVV…QLARQFGLVL (176 aa)). Substrate-binding positions include 83–90 (RGGQVTYH), 150–152 (ALG), and 163–165 (GLS). Catalysis depends on cysteine 181, which acts as the Acyl-thioester intermediate.

It belongs to the LipB family.

The protein localises to the cytoplasm. It carries out the reaction octanoyl-[ACP] + L-lysyl-[protein] = N(6)-octanoyl-L-lysyl-[protein] + holo-[ACP] + H(+). Its pathway is protein modification; protein lipoylation via endogenous pathway; protein N(6)-(lipoyl)lysine from octanoyl-[acyl-carrier-protein]: step 1/2. In terms of biological role, catalyzes the transfer of endogenously produced octanoic acid from octanoyl-acyl-carrier-protein onto the lipoyl domains of lipoate-dependent enzymes. Lipoyl-ACP can also act as a substrate although octanoyl-ACP is likely to be the physiological substrate. The protein is Octanoyltransferase of Xanthomonas campestris pv. campestris (strain 8004).